A 225-amino-acid polypeptide reads, in one-letter code: UPF0173 metal-dependent hydrolase PAE2160 (225 aa).

Belongs to the UPF0173 family.

This chain is UPF0173 metal-dependent hydrolase PAE2160, found in Pyrobaculum aerophilum (strain ATCC 51768 / DSM 7523 / JCM 9630 / CIP 104966 / NBRC 100827 / IM2).